The chain runs to 137 residues: Holo-[acyl-carrier-protein] synthase (137 aa).

2 residues coordinate Mg(2+): D8 and E57.

Belongs to the P-Pant transferase superfamily. AcpS family. Mg(2+) serves as cofactor.

The protein resides in the cytoplasm. It carries out the reaction apo-[ACP] + CoA = holo-[ACP] + adenosine 3',5'-bisphosphate + H(+). Transfers the 4'-phosphopantetheine moiety from coenzyme A to a Ser of acyl-carrier-protein. The polypeptide is Holo-[acyl-carrier-protein] synthase (Cereibacter sphaeroides (strain ATCC 17029 / ATH 2.4.9) (Rhodobacter sphaeroides)).